A 73-amino-acid chain; its full sequence is Plasticin-A1 (73 aa).

Positions 1-22 (MAFLKKSLFLVLFLAIVPLSIC) are cleaved as a signal peptide. The propeptide occupies 23 to 42 (EEEKREEENEEKQEDDDQSE). The disordered stretch occupies residues 25–45 (EKREEENEEKQEDDDQSEKRG). Over residues 30–40 (ENEEKQEDDDQ) the composition is skewed to acidic residues. The residue at position 70 (Gly-70) is a Glycine amide. A propeptide spanning residues 72 to 73 (ES) is cleaved from the precursor.

It belongs to the frog skin active peptide (FSAP) family. Plasticin subfamily. As to expression, expressed by the skin glands.

The protein resides in the secreted. It localises to the target cell membrane. Functionally, peptide with no antimicrobial activity. May act in synergy with cationic peptides by enhancing their activity. Has a moderate hemolytic activity. This is Plasticin-A1 from Agalychnis annae (Blue-sided leaf frog).